Reading from the N-terminus, the 375-residue chain is Erythronate-4-phosphate dehydrogenase (375 aa).

S49 is a substrate binding site. Residues D150 and T178 each contribute to the NAD(+) site. The active site involves R211. D231 contacts NAD(+). The active site involves E236. Catalysis depends on H253, which acts as the Proton donor. Residue G256 coordinates NAD(+).

Belongs to the D-isomer specific 2-hydroxyacid dehydrogenase family. PdxB subfamily. As to quaternary structure, homodimer.

Its subcellular location is the cytoplasm. It catalyses the reaction 4-phospho-D-erythronate + NAD(+) = (R)-3-hydroxy-2-oxo-4-phosphooxybutanoate + NADH + H(+). The protein operates within cofactor biosynthesis; pyridoxine 5'-phosphate biosynthesis; pyridoxine 5'-phosphate from D-erythrose 4-phosphate: step 2/5. Functionally, catalyzes the oxidation of erythronate-4-phosphate to 3-hydroxy-2-oxo-4-phosphonooxybutanoate. This Hydrogenovibrio crunogenus (strain DSM 25203 / XCL-2) (Thiomicrospira crunogena) protein is Erythronate-4-phosphate dehydrogenase.